A 357-amino-acid polypeptide reads, in one-letter code: S-adenosylmethionine:tRNA ribosyltransferase-isomerase (357 aa).

The protein belongs to the QueA family. In terms of assembly, monomer.

It is found in the cytoplasm. It catalyses the reaction 7-aminomethyl-7-carbaguanosine(34) in tRNA + S-adenosyl-L-methionine = epoxyqueuosine(34) in tRNA + adenine + L-methionine + 2 H(+). It functions in the pathway tRNA modification; tRNA-queuosine biosynthesis. Its function is as follows. Transfers and isomerizes the ribose moiety from AdoMet to the 7-aminomethyl group of 7-deazaguanine (preQ1-tRNA) to give epoxyqueuosine (oQ-tRNA). In Phenylobacterium zucineum (strain HLK1), this protein is S-adenosylmethionine:tRNA ribosyltransferase-isomerase.